We begin with the raw amino-acid sequence, 352 residues long: Protein RecA (352 aa).

67–74 contacts ATP; it reads GPESSGKT.

The protein belongs to the RecA family.

The protein localises to the cytoplasm. In terms of biological role, can catalyze the hydrolysis of ATP in the presence of single-stranded DNA, the ATP-dependent uptake of single-stranded DNA by duplex DNA, and the ATP-dependent hybridization of homologous single-stranded DNAs. It interacts with LexA causing its activation and leading to its autocatalytic cleavage. The polypeptide is Protein RecA (Enterobacter sp. (strain 638)).